The following is a 424-amino-acid chain: Histidine--tRNA ligase (424 aa).

The protein belongs to the class-II aminoacyl-tRNA synthetase family. As to quaternary structure, homodimer.

The protein localises to the cytoplasm. The catalysed reaction is tRNA(His) + L-histidine + ATP = L-histidyl-tRNA(His) + AMP + diphosphate + H(+). This Salmonella gallinarum (strain 287/91 / NCTC 13346) protein is Histidine--tRNA ligase.